We begin with the raw amino-acid sequence, 76 residues long: Sec-independent protein translocase protein TatA (76 aa).

The chain crosses the membrane as a helical span at residues 1 to 21 (MGGISIWQLLIIVAIIVLLFG). Residues 43–76 (MADDKSQPQDASFEKVEAKEAASTEQKAKEKEQA) form a disordered region.

This sequence belongs to the TatA/E family. As to quaternary structure, the Tat system comprises two distinct complexes: a TatABC complex, containing multiple copies of TatA, TatB and TatC subunits, and a separate TatA complex, containing only TatA subunits. Substrates initially bind to the TatABC complex, which probably triggers association of the separate TatA complex to form the active translocon.

It is found in the cell inner membrane. Its function is as follows. Part of the twin-arginine translocation (Tat) system that transports large folded proteins containing a characteristic twin-arginine motif in their signal peptide across membranes. TatA could form the protein-conducting channel of the Tat system. The sequence is that of Sec-independent protein translocase protein TatA from Actinobacillus pleuropneumoniae serotype 5b (strain L20).